A 159-amino-acid polypeptide reads, in one-letter code: SsrA-binding protein (159 aa).

Positions 138-153 are enriched in basic and acidic residues; it reads KREDGKDKDWSREKER. Residues 138–159 form a disordered region; it reads KREDGKDKDWSREKERLMKHKA.

It belongs to the SmpB family.

It is found in the cytoplasm. Functionally, required for rescue of stalled ribosomes mediated by trans-translation. Binds to transfer-messenger RNA (tmRNA), required for stable association of tmRNA with ribosomes. tmRNA and SmpB together mimic tRNA shape, replacing the anticodon stem-loop with SmpB. tmRNA is encoded by the ssrA gene; the 2 termini fold to resemble tRNA(Ala) and it encodes a 'tag peptide', a short internal open reading frame. During trans-translation Ala-aminoacylated tmRNA acts like a tRNA, entering the A-site of stalled ribosomes, displacing the stalled mRNA. The ribosome then switches to translate the ORF on the tmRNA; the nascent peptide is terminated with the 'tag peptide' encoded by the tmRNA and targeted for degradation. The ribosome is freed to recommence translation, which seems to be the essential function of trans-translation. The polypeptide is SsrA-binding protein (Pseudoalteromonas translucida (strain TAC 125)).